Here is a 326-residue protein sequence, read N- to C-terminus: Glycerol-3-phosphate dehydrogenase [NAD(P)+] (326 aa).

The NADPH site is built by Trp15, Arg35, and Lys107. 3 residues coordinate sn-glycerol 3-phosphate: Lys107, Gly135, and Ser137. Ala139 is an NADPH binding site. Residues Lys190, Asp243, Ser253, Arg254, and Asn255 each contribute to the sn-glycerol 3-phosphate site. Lys190 functions as the Proton acceptor in the catalytic mechanism. Arg254 lines the NADPH pocket. Residues Leu273 and Glu275 each coordinate NADPH.

Belongs to the NAD-dependent glycerol-3-phosphate dehydrogenase family.

The protein resides in the cytoplasm. It catalyses the reaction sn-glycerol 3-phosphate + NAD(+) = dihydroxyacetone phosphate + NADH + H(+). The enzyme catalyses sn-glycerol 3-phosphate + NADP(+) = dihydroxyacetone phosphate + NADPH + H(+). It participates in membrane lipid metabolism; glycerophospholipid metabolism. Its function is as follows. Catalyzes the reduction of the glycolytic intermediate dihydroxyacetone phosphate (DHAP) to sn-glycerol 3-phosphate (G3P), the key precursor for phospholipid synthesis. The protein is Glycerol-3-phosphate dehydrogenase [NAD(P)+] of Bradyrhizobium sp. (strain BTAi1 / ATCC BAA-1182).